A 103-amino-acid chain; its full sequence is Cell division protein FtsB (103 aa).

Residues 1 to 3 are Cytoplasmic-facing; the sequence is MGK. The chain crosses the membrane as a helical span at residues 4–21; it reads LTLLLLAILVWLQYSLWF. At 22–103 the chain is on the periplasmic side; that stretch reads GKNGIHDYSR…RAQTAGQNNR (82 aa). The stretch at 31–71 forms a coiled coil; sequence RVNDDVAAQQATNAKLKARNDQLFAEIDDLNGGQEALEERA.

Belongs to the FtsB family. Part of a complex composed of FtsB, FtsL and FtsQ.

Its subcellular location is the cell inner membrane. Essential cell division protein. May link together the upstream cell division proteins, which are predominantly cytoplasmic, with the downstream cell division proteins, which are predominantly periplasmic. The chain is Cell division protein FtsB from Escherichia fergusonii (strain ATCC 35469 / DSM 13698 / CCUG 18766 / IAM 14443 / JCM 21226 / LMG 7866 / NBRC 102419 / NCTC 12128 / CDC 0568-73).